The following is a 150-amino-acid chain: Deoxyuridine 5'-triphosphate nucleotidohydrolase (150 aa).

Residues 70–72 (RSG), N83, and 87–89 (TID) each bind substrate.

The protein belongs to the dUTPase family. Mg(2+) serves as cofactor.

The enzyme catalyses dUTP + H2O = dUMP + diphosphate + H(+). Its pathway is pyrimidine metabolism; dUMP biosynthesis; dUMP from dCTP (dUTP route): step 2/2. Its function is as follows. This enzyme is involved in nucleotide metabolism: it produces dUMP, the immediate precursor of thymidine nucleotides and it decreases the intracellular concentration of dUTP so that uracil cannot be incorporated into DNA. The protein is Deoxyuridine 5'-triphosphate nucleotidohydrolase of Desulfotalea psychrophila (strain LSv54 / DSM 12343).